Consider the following 289-residue polypeptide: Homoserine kinase (289 aa).

79-89 (PLARGLGSSSS) is a binding site for ATP.

Belongs to the GHMP kinase family. Homoserine kinase subfamily.

It is found in the cytoplasm. The catalysed reaction is L-homoserine + ATP = O-phospho-L-homoserine + ADP + H(+). Its pathway is amino-acid biosynthesis; L-threonine biosynthesis; L-threonine from L-aspartate: step 4/5. Functionally, catalyzes the ATP-dependent phosphorylation of L-homoserine to L-homoserine phosphate. This is Homoserine kinase from Streptococcus pneumoniae serotype 2 (strain D39 / NCTC 7466).